Reading from the N-terminus, the 131-residue chain is MSWQTYVDEHLLCENEGNHLTSAAIIGQDGTVWAQSANFPQFKPEEITGIMNDFAVPGTLAPTGLYLGGTKYMVIQGEPEAVIRGKKGPGGITIKKTNQALIIGIYDEPMTPGQCNMIVERLGDYLIEQSL.

Belongs to the profilin family. Occurs in many kinds of cells as a complex with monomeric actin in a 1:1 ratio.

It is found in the cytoplasm. The protein resides in the cytoskeleton. Functionally, binds to actin and affects the structure of the cytoskeleton. At high concentrations, profilin prevents the polymerization of actin, whereas it enhances it at low concentrations. By binding to PIP2, it inhibits the formation of IP3 and DG. This chain is Profilin-2, found in Solanum lycopersicum (Tomato).